We begin with the raw amino-acid sequence, 341 residues long: Heat-inducible transcription repressor HrcA (341 aa).

Belongs to the HrcA family.

Functionally, negative regulator of class I heat shock genes (grpE-dnaK-dnaJ and groELS operons). Prevents heat-shock induction of these operons. In Corynebacterium jeikeium (strain K411), this protein is Heat-inducible transcription repressor HrcA.